The following is a 444-amino-acid chain: Tol-Pal system protein TolB (444 aa).

The signal sequence occupies residues 1-19; that stretch reads MRNIIYFILSLLFSVTSYA.

This sequence belongs to the TolB family. In terms of assembly, the Tol-Pal system is composed of five core proteins: the inner membrane proteins TolA, TolQ and TolR, the periplasmic protein TolB and the outer membrane protein Pal. They form a network linking the inner and outer membranes and the peptidoglycan layer.

The protein resides in the periplasm. Functionally, part of the Tol-Pal system, which plays a role in outer membrane invagination during cell division and is important for maintaining outer membrane integrity. This is Tol-Pal system protein TolB from Rickettsia africae (strain ESF-5).